Consider the following 365-residue polypeptide: GDSL esterase/lipase At3g62280 (365 aa).

The first 25 residues, 1–25 (MDYTVSSLQCFFLVLCLSLLVCSNS), serve as a signal peptide directing secretion. Serine 43 serves as the catalytic Nucleophile. N-linked (GlcNAc...) asparagine glycosylation is found at asparagine 137, asparagine 178, and asparagine 231. Residues aspartate 333 and histidine 336 contribute to the active site.

It belongs to the 'GDSL' lipolytic enzyme family.

It localises to the secreted. The polypeptide is GDSL esterase/lipase At3g62280 (Arabidopsis thaliana (Mouse-ear cress)).